A 120-amino-acid polypeptide reads, in one-letter code: Ribosome-binding factor A (120 aa).

Belongs to the RbfA family. In terms of assembly, monomer. Binds 30S ribosomal subunits, but not 50S ribosomal subunits or 70S ribosomes.

It localises to the cytoplasm. One of several proteins that assist in the late maturation steps of the functional core of the 30S ribosomal subunit. Associates with free 30S ribosomal subunits (but not with 30S subunits that are part of 70S ribosomes or polysomes). Required for efficient processing of 16S rRNA. May interact with the 5'-terminal helix region of 16S rRNA. This is Ribosome-binding factor A from Lactobacillus delbrueckii subsp. bulgaricus (strain ATCC 11842 / DSM 20081 / BCRC 10696 / JCM 1002 / NBRC 13953 / NCIMB 11778 / NCTC 12712 / WDCM 00102 / Lb 14).